We begin with the raw amino-acid sequence, 234 residues long: 2-C-methyl-D-erythritol 4-phosphate cytidylyltransferase (234 aa).

The protein belongs to the IspD/TarI cytidylyltransferase family. IspD subfamily.

It catalyses the reaction 2-C-methyl-D-erythritol 4-phosphate + CTP + H(+) = 4-CDP-2-C-methyl-D-erythritol + diphosphate. It functions in the pathway isoprenoid biosynthesis; isopentenyl diphosphate biosynthesis via DXP pathway; isopentenyl diphosphate from 1-deoxy-D-xylulose 5-phosphate: step 2/6. Catalyzes the formation of 4-diphosphocytidyl-2-C-methyl-D-erythritol from CTP and 2-C-methyl-D-erythritol 4-phosphate (MEP). In Shewanella sediminis (strain HAW-EB3), this protein is 2-C-methyl-D-erythritol 4-phosphate cytidylyltransferase.